The sequence spans 151 residues: MKAIFIILAILMVTQAFKMTSKVNTKLQSQIQSKFQSKNKLASTFQTSSQLKYYCWEEPYTSSITGCSTSLACYEASDCSVTGNDQDKCNNVGQNMIDKFFELWGVCINDYETCLQYVDRAWIHYSDSEFCGCTNPEQESAFRDAMDCLQF.

Positions 1-16 (MKAIFIILAILMVTQA) are cleaved as a signal peptide. A propeptide spanning residues 17–52 (FKMTSKVNTKLQSQIQSKFQSKNKLASTFQTSSQLK) is cleaved from the precursor.

It localises to the secreted. Functionally, mating ciliate pheromones (or gamones) are diffusible extracellular communication signals that distinguish different intraspecific classes of cells commonly referred to as 'mating types'. They prepare the latter for conjugation by changing their cell surface properties. The polypeptide is Mating pheromone 3 (PHR3) (Euplotoides octocarinatus (Freshwater ciliate)).